We begin with the raw amino-acid sequence, 295 residues long: Ent-pimara-9(11),15-diene synthase (295 aa).

It belongs to the terpene synthase family. Monomer. Requires a divalent metal cation as cofactor.

The catalysed reaction is ent-copalyl diphosphate = ent-pimara-9(11),15-diene + diphosphate. It participates in antibiotic biosynthesis. Functionally, involved in viguiepinol biosynthesis. Catalyzes the conversion of copalyl diphosphate (ent-CDP) into pimara-9(11),15-diene (PMD). The sequence is that of Ent-pimara-9(11),15-diene synthase from Streptomyces sp. (strain KO-3988).